The sequence spans 462 residues: MISYSALTTHGKSTLPSIEGWNGNHNIVKNPPSAVHTRRIIKVGTDNCLLEATHESGGRSDQVIRQFARGVNPMVSVQYSNHGTGGNGSLTTPNDYSIFTTGGHGKLPNRIMKGGAFRPPIIKKEDLLPLSRLPREQTSVFSTKCSIDQTKKITPDVVEYFKHIHQNPIHSSASSQFTFSRDSPHHVPKNIHLMVNPNGGTVGSAQSTKVWNQKGSLGQPKITESTVATDVLTVSTNAPHSYHKQQTHPIPSNIDLLVQKDLLTTSANAPHSYHKQQTHSIPFNIDLMVNSDPIRTSADAPHSYRKQQTHPVPKNIHLMVNENHPPVLNVHTNARASKDDTGEARVWPRMESPLTVAGMDYLYPLKISQQKWHHGDNPIQLVNKVPHCEVNSGGGAAMGGRPRYSQMHQMEDQKMVLSKPRPERNHSKSQIENVGTVVKLNQERIFSGAKVLNRKIQVNSNH.

It belongs to the IIV-6 329R family.

This is an uncharacterized protein from Aedes vexans (Inland floodwater mosquito).